The sequence spans 166 residues: Probable protein tyrosine phosphatase type IVA A (166 aa).

One can recognise a Tyrosine-protein phosphatase domain in the interval 10 to 164; that stretch reads NPASLVESST…YKSKKKSSCR (155 aa). A disulfide bridge links cysteine 52 with cysteine 107. Aspartate 75 (proton donor) is an active-site residue. The active-site Phosphocysteine intermediate is the cysteine 107. A phosphate-binding site is contributed by 108-113; the sequence is VAGLGR. Arginine 113 is a binding site for substrate. Residue cysteine 163 is modified to Cysteine methyl ester. The S-farnesyl cysteine moiety is linked to residue cysteine 163. A propeptide spans 164 to 166 (removed in mature form); sequence RIM.

Belongs to the protein-tyrosine phosphatase family.

Its subcellular location is the membrane. It carries out the reaction O-phospho-L-tyrosyl-[protein] + H2O = L-tyrosyl-[protein] + phosphate. This is Probable protein tyrosine phosphatase type IVA A from Dictyostelium discoideum (Social amoeba).